The sequence spans 190 residues: uncharacterized protein (190 aa).

Disordered regions lie at residues 1–21 and 155–190; these read MALR…ATVG and PEMG…TQAS. Low complexity predominate over residues 181-190; that stretch reads SPSSHPTQAS.

This is an uncharacterized protein from Homo sapiens (Human).